The sequence spans 1034 residues: Translation initiation factor IF-2 (1034 aa).

2 disordered regions span residues 118-140 (AAEAVDMQPESVEAQAPAPQSVE) and 154-446 (EAEA…NESA). 2 stretches are compositionally biased toward low complexity: residues 162 to 178 (TPPVETPAVEAVEAAAP) and 212 to 228 (PAVKAEAEPQSAQPAAS). Basic and acidic residues predominate over residues 304–315 (DRAREDARRAAE). Residues 535–702 (PRAPVVTVMG…NVLLQAEILE (168 aa)) enclose the tr-type G domain. Positions 544-551 (GHVDHGKT) are G1. A GTP-binding site is contributed by 544 to 551 (GHVDHGKT). Residues 569 to 573 (GITQH) form a G2 region. Residues 590 to 593 (DTPG) are G3. Residues 590–594 (DTPGH) and 644–647 (NKID) each bind GTP. Residues 644 to 647 (NKID) are G4. Residues 680–682 (SAK) form a G5 region.

Belongs to the TRAFAC class translation factor GTPase superfamily. Classic translation factor GTPase family. IF-2 subfamily.

It localises to the cytoplasm. Its function is as follows. One of the essential components for the initiation of protein synthesis. Protects formylmethionyl-tRNA from spontaneous hydrolysis and promotes its binding to the 30S ribosomal subunits. Also involved in the hydrolysis of GTP during the formation of the 70S ribosomal complex. The polypeptide is Translation initiation factor IF-2 (Bordetella avium (strain 197N)).